The primary structure comprises 1287 residues: DNA-directed RNA polymerase subunit beta (1287 aa).

This sequence belongs to the RNA polymerase beta chain family. As to quaternary structure, the RNAP catalytic core consists of 2 alpha, 1 beta, 1 beta' and 1 omega subunit. When a sigma factor is associated with the core the holoenzyme is formed, which can initiate transcription.

The catalysed reaction is RNA(n) + a ribonucleoside 5'-triphosphate = RNA(n+1) + diphosphate. Functionally, DNA-dependent RNA polymerase catalyzes the transcription of DNA into RNA using the four ribonucleoside triphosphates as substrates. This is DNA-directed RNA polymerase subunit beta from Mycoplasma capricolum subsp. capricolum (strain California kid / ATCC 27343 / NCTC 10154).